The chain runs to 259 residues: 7-cyano-7-deazaguanine synthase (259 aa).

An ATP-binding site is contributed by 32-42; it reads LSGGLDSVTCL. 4 residues coordinate Zn(2+): Cys-223, Cys-233, Cys-236, and Cys-239.

Belongs to the QueC family. Zn(2+) is required as a cofactor.

The enzyme catalyses 7-carboxy-7-deazaguanine + NH4(+) + ATP = 7-cyano-7-deazaguanine + ADP + phosphate + H2O + H(+). The protein operates within purine metabolism; 7-cyano-7-deazaguanine biosynthesis. Catalyzes the ATP-dependent conversion of 7-carboxy-7-deazaguanine (CDG) to 7-cyano-7-deazaguanine (preQ(0)). The sequence is that of 7-cyano-7-deazaguanine synthase from Psychrobacter arcticus (strain DSM 17307 / VKM B-2377 / 273-4).